The primary structure comprises 404 residues: Bifunctional enzyme IspD/IspF (404 aa).

Residues 1–243 (MQAEEQFSCG…KLTRMAIPDV (243 aa)) are 2-C-methyl-D-erythritol 4-phosphate cytidylyltransferase. The tract at residues 244–404 (RTGNGYDVHQ…TVVYASGGDA (161 aa)) is 2-C-methyl-D-erythritol 2,4-cyclodiphosphate synthase. Asp250 and His252 together coordinate a divalent metal cation. Residues 250-252 (DVH) and 276-277 (HS) each bind 4-CDP-2-C-methyl-D-erythritol 2-phosphate. His284 contributes to the a divalent metal cation binding site. Residues 298 to 300 (DIG), 374 to 377 (TTNE), Phe381, and Arg384 each bind 4-CDP-2-C-methyl-D-erythritol 2-phosphate.

In the N-terminal section; belongs to the IspD/TarI cytidylyltransferase family. IspD subfamily. It in the C-terminal section; belongs to the IspF family. A divalent metal cation is required as a cofactor.

The catalysed reaction is 2-C-methyl-D-erythritol 4-phosphate + CTP + H(+) = 4-CDP-2-C-methyl-D-erythritol + diphosphate. It carries out the reaction 4-CDP-2-C-methyl-D-erythritol 2-phosphate = 2-C-methyl-D-erythritol 2,4-cyclic diphosphate + CMP. It functions in the pathway isoprenoid biosynthesis; isopentenyl diphosphate biosynthesis via DXP pathway; isopentenyl diphosphate from 1-deoxy-D-xylulose 5-phosphate: step 2/6. Its pathway is isoprenoid biosynthesis; isopentenyl diphosphate biosynthesis via DXP pathway; isopentenyl diphosphate from 1-deoxy-D-xylulose 5-phosphate: step 4/6. Functionally, bifunctional enzyme that catalyzes the formation of 4-diphosphocytidyl-2-C-methyl-D-erythritol from CTP and 2-C-methyl-D-erythritol 4-phosphate (MEP) (IspD), and catalyzes the conversion of 4-diphosphocytidyl-2-C-methyl-D-erythritol 2-phosphate (CDP-ME2P) to 2-C-methyl-D-erythritol 2,4-cyclodiphosphate (ME-CPP) with a corresponding release of cytidine 5-monophosphate (CMP) (IspF). This is Bifunctional enzyme IspD/IspF from Sinorhizobium medicae (strain WSM419) (Ensifer medicae).